Consider the following 797-residue polypeptide: Plakophilin-3 (797 aa).

Residues 56–82 (QLGQQPRHNGAAEPEPEAETARGTSRG) form a disordered region. R81 is subject to Omega-N-methylarginine. Residues S123, S180, and S183 each carry the phosphoserine modification. Position 195 is a phosphotyrosine; by SRC (Y195). S238 and S240 each carry phosphoserine. Phosphothreonine is present on T250. R261 carries the omega-N-methylarginine modification. The required for interaction with SFN stretch occupies residues 283–288 (SLSLSL). Phosphoserine occurs at positions 285, 313, 314, and 331. The interval 294-724 (LPDVHGFNSY…AEVLVNIIAV (431 aa)) is required for interaction with GSK3B. ARM repeat units follow at residues 305-348 (SHRT…HKCY), 351-390 (AAAKKQARSLQAVPRLVKLFNHANQEVQRHATGAMRNLIY), 393-432 (ADNKLALVEENGIFELLRTLREQDDELRKNVTGILWNLSS), 449-487 (TDLVLSPLSGAGGPPLIQQNASEAEIFYNATGFLRNLSS), 491-536 (ATRQ…NLSY), 596-637 (PKGL…NITA), 645-684 (VLSRLALEQERILNPLLDRVRTADHHQLRSLTGLIRNLSR), and 689-730 (KDEM…NLVV). Residues 516–797 (AGKCEDKSVE…GYRKEDFLGP (282 aa)) are required for binding to PKP2 mRNA.

The protein belongs to the beta-catenin family. As to quaternary structure, found in a complex composed of CDH1, RAP1A and PKP3; PKP3 acts as a scaffold protein within the complex, the complex is required for CDH1 localization to mature desmosome cell junctions. Interacts with FXR1; the interaction facilitates the binding of PKP3 to PKP2 mRNA. Interacts (via ARM repeats) with GSK3B; the interaction may be involved in PKP3 protein degradation. Interacts with hyperphosphorylated and hypophosphorylated RB1; the interaction inhibits RB1 interaction with and repression of the transcription factor E2F1, potentially via sequestering RB1 to the cytoplasm. Interacts with CDKN1A; the interaction sequesters CDKN1A to the cytoplasm thereby repressing its role as an inhibitor of CDK4- and CDK6-driven RB1 phosphorylation. Interacts (via N-terminus) with SFN; the interaction maintains the cytoplasmic pool of PKP3, facilitates PKP3 exchange at desmosomes and restricts PKP3 localization to existing desmosome cell junctions. Interacts (via N-terminus) with JUP; the interaction is required for PKP3 localization to desmosome cell-cell junctions. In terms of processing, phosphorylated at Ser-285 when localized to the cytoplasm, PKP3 at desmosome cell junctions is not phosphorylated. Phosphorylation at Try-195 by SRC is induced by reactive oxygen species and potentially acts as a release mechanism from desmosome cell-cell junctions. In terms of tissue distribution, expressed in the epidermis of the skin, in squamous non-cornifying epithelial cells in the vagina, single layer epithelia of the duodenum and pancreas acini and non-epithelial dendritic reticulum cells of lymph node follicles (at protein level). Expressed in the oral cavity mucosa, epidermis and small intestine epithelium (at protein level). As to expression, expressed in the oral cavity mucosa and epithelial cells of the crypts and villi in the small intestine (at protein level). Expressed in the epidermis with more abundant expression found in the basal and low spinous cells (at protein level).

The protein resides in the nucleus. It localises to the cell junction. It is found in the desmosome. Its subcellular location is the cytoplasm. The protein localises to the cell membrane. The protein resides in the adherens junction. Functionally, a component of desmosome cell-cell junctions which are required for positive regulation of cellular adhesion. Required for the localization of DSG2, DSP and PKP2 to mature desmosome junctions. May also play a role in the maintenance of DSG3 protein abundance in keratinocytes. Required for the formation of DSP-containing desmosome precursors in the cytoplasm during desmosome assembly. Also regulates the accumulation of CDH1 to mature desmosome junctions, via cAMP-dependent signaling and its interaction with activated RAP1A. Positively regulates the stabilization of PKP2 mRNA and therefore protein abundance, via its interaction with FXR1, may also regulate the protein abundance of DSP via the same mechanism. May also regulate the protein abundance of the desmosome component PKP1. Required for the organization of desmosome junctions at intercellular borders between basal keratinocytes of the epidermis, as a result plays a role in maintenance of the dermal barrier and regulation of the dermal inflammatory response. Required during epidermal keratinocyte differentiation for cell adherence at tricellular cell-cell contacts, via regulation of the timely formation of adherens junctions and desmosomes in a calcium-dependent manner, and may also play a role in the organization of the intracellular actin fiber belt. Acts as a negative regulator of the inflammatory response in hematopoietic cells of the skin and intestine, via modulation of proinflammatory cytokine production. Important for epithelial barrier maintenance in the intestine to reduce intestinal permeability, thereby plays a role in protection from intestinal-derived endotoxemia. Required for the development of hair follicles, via a role in the regulation of inner root sheaf length, correct alignment and anterior-posterior polarity of hair follicles. Promotes proliferation and cell-cycle G1/S phase transition of keratinocytes. Promotes E2F1-driven transcription of G1/S phase promoting genes by acting to release E2F1 from its inhibitory interaction with RB1, via sequestering RB1 and CDKN1A to the cytoplasm and thereby increasing CDK4- and CDK6-driven phosphorylation of RB1. May act as a scaffold protein to facilitate MAPK phosphorylation of RPS6KA protein family members and subsequently promote downstream EGFR signaling. May play a role in the positive regulation of transcription of Wnt-mediated TCF-responsive target genes. The polypeptide is Plakophilin-3 (PKP3) (Homo sapiens (Human)).